The following is a 428-amino-acid chain: MVSIPRGFRDFPPPMMILRKRVLSKIEEIFRRYGFDPIETPSLEYWETVKGKLGEEAENKLMFIFPDFFSKEWYTLRYELTFPLARYVAMHPETPLPFKRYHIGNVWRHEEPQKGRYREFLQCDADIVGSPYPEADAEVISVNIDAMKSFDFENFRVRLNDRRLLTGVFEEELGINNPFPIYRAIDKLDKIGVDGVKGELARLGAHESLIGRIMELISTRGSFNEISNTFRRIENDKVKVALDHLEEIFSIVSDDRLVFDLSLVRGLDYYTGPVFETSVSEPRIGSLAGGGRYDRLIGLYSGKDVPATGVSLGVERLIDAGLELGIFDLSERSYTDVFIVSVRRENWRYAWRISRILRERGFSTSLDLMRRSQSAQREYANKIGAKVIAFVGPSEEETETVTLYSRDLRKTVKISELIDSLREFLSVS.

This sequence belongs to the class-II aminoacyl-tRNA synthetase family.

The protein resides in the cytoplasm. It catalyses the reaction tRNA(His) + L-histidine + ATP = L-histidyl-tRNA(His) + AMP + diphosphate + H(+). The sequence is that of Histidine--tRNA ligase from Korarchaeum cryptofilum (strain OPF8).